The sequence spans 248 residues: Coproheme decarboxylase (248 aa).

Residues R130, 144-148 (YPMDK), H171, Q184, and S222 each bind Fe-coproporphyrin III. Y144 is an active-site residue.

Belongs to the ChdC family. Type 1 subfamily. It depends on Fe-coproporphyrin III as a cofactor.

It catalyses the reaction Fe-coproporphyrin III + 2 H2O2 + 2 H(+) = heme b + 2 CO2 + 4 H2O. It carries out the reaction Fe-coproporphyrin III + H2O2 + H(+) = harderoheme III + CO2 + 2 H2O. The catalysed reaction is harderoheme III + H2O2 + H(+) = heme b + CO2 + 2 H2O. The protein operates within porphyrin-containing compound metabolism; protoheme biosynthesis. Functionally, involved in coproporphyrin-dependent heme b biosynthesis. Catalyzes the decarboxylation of Fe-coproporphyrin III (coproheme) to heme b (protoheme IX), the last step of the pathway. The reaction occurs in a stepwise manner with a three-propionate intermediate. This chain is Coproheme decarboxylase, found in Geobacillus thermodenitrificans (strain NG80-2).